We begin with the raw amino-acid sequence, 160 residues long: Glyoxalase domain-containing protein 5 (160 aa).

Residues Arg33–Tyr153 enclose the VOC domain.

This sequence belongs to the glyoxalase I family.

In Xenopus tropicalis (Western clawed frog), this protein is Glyoxalase domain-containing protein 5 (glod5).